Reading from the N-terminus, the 723-residue chain is Catalase-peroxidase (723 aa).

The N-terminal stretch at Met-1 to Trp-29 is a signal peptide. The tryptophyl-tyrosyl-methioninium (Trp-Tyr) (with M-251) cross-link spans Trp-97–Tyr-225. His-98 acts as the Proton acceptor in catalysis. Positions Tyr-225 to Met-251 form a cross-link, tryptophyl-tyrosyl-methioninium (Tyr-Met) (with W-97). A heme b-binding site is contributed by His-266.

It belongs to the peroxidase family. Peroxidase/catalase subfamily. As to quaternary structure, homodimer or homotetramer. Heme b serves as cofactor. Formation of the three residue Trp-Tyr-Met cross-link is important for the catalase, but not the peroxidase activity of the enzyme.

It carries out the reaction H2O2 + AH2 = A + 2 H2O. It catalyses the reaction 2 H2O2 = O2 + 2 H2O. Its function is as follows. Bifunctional enzyme with both catalase and broad-spectrum peroxidase activity. The polypeptide is Catalase-peroxidase (Hyphomonas neptunium (strain ATCC 15444)).